The sequence spans 298 residues: Acetaldehyde dehydrogenase (298 aa).

Position 6–9 (6–9) interacts with NAD(+); the sequence is SGNI. The Acyl-thioester intermediate role is filled by Cys-121. NAD(+) is bound by residues 152–160 and Asn-271; that span reads SAGPGTRAN.

This sequence belongs to the acetaldehyde dehydrogenase family.

The catalysed reaction is acetaldehyde + NAD(+) + CoA = acetyl-CoA + NADH + H(+). The chain is Acetaldehyde dehydrogenase from Mycobacterium avium (strain 104).